The chain runs to 1471 residues: Myosin-51 (1471 aa).

Positions 7–61 (SVGSECWVSNNNGHWDAARLIEIKDNGGGKVVATVAKSSGVLETVNYQQLQNRNI) constitute a Myosin N-terminal SH3-like domain. Positions 65–749 (ESPSDLTNLP…VIGNFEEAHR (685 aa)) constitute a Myosin motor domain. Residue 159 to 166 (GESGAGKT) participates in ATP binding. Residues 628 to 650 (LSQLMTTVSSTNVHYIRCIKPNE) form an actin-binding region. 6 consecutive IQ domains span residues 753–773 (SKST…KEYQ), 776–796 (VKFI…QRFE), 801–821 (ERAA…KRYL), 824–844 (IKCA…SRYI), 849–869 (ESSA…KTFR), and 872–892 (KKSV…RYLR). Residues 909–952 (KNLQASITEVSKQLKSNSKKVTVLRNKLNILNNSLSKWKCLIKK) are a coiled coil. The Dilute domain maps to 1171–1417 (EKPLQAVLYW…SKAVEALSCK (247 aa)).

It belongs to the TRAFAC class myosin-kinesin ATPase superfamily. Myosin family.

The protein resides in the cytoplasm. In terms of biological role, involved in cytokinesis. The chain is Myosin-51 (myo51) from Schizosaccharomyces pombe (strain 972 / ATCC 24843) (Fission yeast).